Consider the following 125-residue polypeptide: Large ribosomal subunit protein bL12 (125 aa).

It belongs to the bacterial ribosomal protein bL12 family. In terms of assembly, homodimer. Part of the ribosomal stalk of the 50S ribosomal subunit. Forms a multimeric L10(L12)X complex, where L10 forms an elongated spine to which 2 to 4 L12 dimers bind in a sequential fashion. Binds GTP-bound translation factors.

Forms part of the ribosomal stalk which helps the ribosome interact with GTP-bound translation factors. Is thus essential for accurate translation. The chain is Large ribosomal subunit protein bL12 from Chlorobium limicola (strain DSM 245 / NBRC 103803 / 6330).